Consider the following 66-residue polypeptide: LYR motif-containing protein PHYPADRAFT_186863 (66 aa).

This sequence belongs to the complex I LYR family. LYRM9 subfamily.

The protein is LYR motif-containing protein PHYPADRAFT_186863 of Physcomitrium patens (Spreading-leaved earth moss).